The chain runs to 296 residues: Transmembrane protein 156 (296 aa).

Residues Met-1–Thr-4 are Cytoplasmic-facing. The chain crosses the membrane as a helical span at residues Ala-5–Phe-25. Topologically, residues Lys-26–Ser-211 are extracellular. N-linked (GlcNAc...) asparagine glycosylation is found at Asn-45 and Asn-156. The chain crosses the membrane as a helical span at residues Met-212–Ile-232. Residues Arg-233 to Leu-296 lie on the Cytoplasmic side of the membrane.

Its subcellular location is the membrane. The protein is Transmembrane protein 156 (TMEM156) of Homo sapiens (Human).